Reading from the N-terminus, the 294-residue chain is Shikimate dehydrogenase (NADP(+)) (294 aa).

Shikimate is bound by residues 23–25 and threonine 76; that span reads SRS. The active-site Proton acceptor is lysine 80. Positions 101 and 116 each coordinate shikimate. NADP(+) contacts are provided by residues 141–145 and methionine 233; that span reads GAGGA. Tyrosine 235 contacts shikimate. An NADP(+)-binding site is contributed by glycine 256.

This sequence belongs to the shikimate dehydrogenase family. Homodimer.

It catalyses the reaction shikimate + NADP(+) = 3-dehydroshikimate + NADPH + H(+). It participates in metabolic intermediate biosynthesis; chorismate biosynthesis; chorismate from D-erythrose 4-phosphate and phosphoenolpyruvate: step 4/7. Functionally, involved in the biosynthesis of the chorismate, which leads to the biosynthesis of aromatic amino acids. Catalyzes the reversible NADPH linked reduction of 3-dehydroshikimate (DHSA) to yield shikimate (SA). The protein is Shikimate dehydrogenase (NADP(+)) of Methylibium petroleiphilum (strain ATCC BAA-1232 / LMG 22953 / PM1).